The following is a 117-amino-acid chain: Large ribosomal subunit protein uL18 (117 aa).

The protein belongs to the universal ribosomal protein uL18 family. Part of the 50S ribosomal subunit; part of the 5S rRNA/L5/L18/L25 subcomplex. Contacts the 5S and 23S rRNAs.

In terms of biological role, this is one of the proteins that bind and probably mediate the attachment of the 5S RNA into the large ribosomal subunit, where it forms part of the central protuberance. The sequence is that of Large ribosomal subunit protein uL18 from Onion yellows phytoplasma (strain OY-M).